Here is a 369-residue protein sequence, read N- to C-terminus: DNA replication and repair protein RecF (369 aa).

Glycine 30–threonine 37 is an ATP binding site.

Belongs to the RecF family.

The protein resides in the cytoplasm. Its function is as follows. The RecF protein is involved in DNA metabolism; it is required for DNA replication and normal SOS inducibility. RecF binds preferentially to single-stranded, linear DNA. It also seems to bind ATP. The chain is DNA replication and repair protein RecF from Bacteroides thetaiotaomicron (strain ATCC 29148 / DSM 2079 / JCM 5827 / CCUG 10774 / NCTC 10582 / VPI-5482 / E50).